Here is a 123-residue protein sequence, read N- to C-terminus: Putative membrane protein insertion efficiency factor (123 aa).

Positions 1–23 (MGSCGGKHTGKGAPKPYSRNFTD) are disordered.

The protein belongs to the UPF0161 family.

It localises to the cell inner membrane. Could be involved in insertion of integral membrane proteins into the membrane. This is Putative membrane protein insertion efficiency factor from Brucella ovis (strain ATCC 25840 / 63/290 / NCTC 10512).